We begin with the raw amino-acid sequence, 297 residues long: Nucleotide-binding protein CJA_2809 (297 aa).

8 to 15 provides a ligand contact to ATP; it reads GLSGSGKT. 59 to 62 provides a ligand contact to GTP; that stretch reads DVRN.

Belongs to the RapZ-like family.

Its function is as follows. Displays ATPase and GTPase activities. The polypeptide is Nucleotide-binding protein CJA_2809 (Cellvibrio japonicus (strain Ueda107) (Pseudomonas fluorescens subsp. cellulosa)).